Reading from the N-terminus, the 300-residue chain is 4-hydroxy-tetrahydrodipicolinate synthase (300 aa).

Thr-55 is a binding site for pyruvate. Catalysis depends on Tyr-143, which acts as the Proton donor/acceptor. Residue Lys-171 is the Schiff-base intermediate with substrate of the active site. A pyruvate-binding site is contributed by Ile-211.

It belongs to the DapA family. In terms of assembly, homotetramer; dimer of dimers.

It localises to the cytoplasm. The enzyme catalyses L-aspartate 4-semialdehyde + pyruvate = (2S,4S)-4-hydroxy-2,3,4,5-tetrahydrodipicolinate + H2O + H(+). It functions in the pathway amino-acid biosynthesis; L-lysine biosynthesis via DAP pathway; (S)-tetrahydrodipicolinate from L-aspartate: step 3/4. Catalyzes the condensation of (S)-aspartate-beta-semialdehyde [(S)-ASA] and pyruvate to 4-hydroxy-tetrahydrodipicolinate (HTPA). The sequence is that of 4-hydroxy-tetrahydrodipicolinate synthase from Mycobacterium leprae (strain Br4923).